A 292-amino-acid polypeptide reads, in one-letter code: Seed lectin (292 aa).

The first 37 residues, 1–37 (MATSNSRPHLLQTHKPFSVVLAISITFFLLLLNKVNS), serve as a signal peptide directing secretion. 2 N-linked (GlcNAc...) asparagine glycosylation sites follow: Asn82 and Asn154. Residues Asp163 and Asp165 each coordinate Mn(2+). Positions 165, 167, 169, and 172 each coordinate Ca(2+). Asp172 and His177 together coordinate Mn(2+). N-linked (GlcNAc...) asparagine glycosylation is present at Asn186.

Belongs to the leguminous lectin family.

Mannose/glucose-specific lectin. The chain is Seed lectin from Styphnolobium japonicum (Japanese pagoda tree).